The following is a 150-amino-acid chain: 5-hydroxytryptamine receptor 1B (150 aa).

Topologically, residues 1–83 are extracellular; sequence VEARSRILKQ…AARERKATKT (83 aa). Residues 27-40 show a composition bias toward polar residues; the sequence is DSPGSTSSVTSINS. The tract at residues 27-50 is disordered; it reads DSPGSTSSVTSINSRAPDLPSESG. The helical transmembrane segment at 84–105 threads the bilayer; it reads LGIILGAFIVCWLPFFIISLAM. Over 106–115 the chain is Cytoplasmic; that stretch reads PICKDACWFH. Residues 116 to 138 form a helical membrane-spanning segment; the sequence is LAIFDFFTWLGYLNSLINPIIYT. Residues 133–137 carry the NPxxY motif; important for ligand-induced conformation changes and signaling motif; sequence NPIIY. At 139–150 the chain is on the extracellular side; it reads MFNEDFKQAFHK.

Belongs to the G-protein coupled receptor 1 family. Homodimer. Heterodimer with HTR1D. In terms of processing, phosphorylated. Desensitization of the receptor may be mediated by its phosphorylation. Palmitoylated.

Its subcellular location is the cell membrane. Its function is as follows. G-protein coupled receptor for 5-hydroxytryptamine (serotonin). Also functions as a receptor for ergot alkaloid derivatives, various anxiolytic and antidepressant drugs and other psychoactive substances, such as lysergic acid diethylamide (LSD). Ligand binding causes a conformation change that triggers signaling via guanine nucleotide-binding proteins (G proteins) and modulates the activity of downstream effectors, such as adenylate cyclase. HTR1B is coupled to G(i)/G(o) G alpha proteins and mediates inhibitory neurotransmission by inhibiting adenylate cyclase activity. Arrestin family members inhibit signaling via G proteins and mediate activation of alternative signaling pathways. Regulates the release of 5-hydroxytryptamine, dopamine and acetylcholine in the brain, and thereby affects neural activity, nociceptive processing, pain perception, mood and behavior. Besides, plays a role in vasoconstriction of cerebral arteries. In Sus scrofa (Pig), this protein is 5-hydroxytryptamine receptor 1B (HTR1B).